A 398-amino-acid chain; its full sequence is uncharacterized protein (398 aa).

10 helical membrane passes run 43 to 65, 89 to 108, 156 to 173, 180 to 198, 224 to 246, 259 to 281, 291 to 311, 316 to 338, 351 to 373, and 380 to 397; these read PILPMLITSVGGGSLSIGLVGGL, IFVVLGYLTSSMFKLLLGLS, TAGAILGSTLSLLFILYL, IILIAAVIGFLTLIPLYFV, LFILISAIFTLSNFSYMFYILRA, IIIPIALYILYNIFYATFSIPFG, SVLTIGYIVYGIVSLGFAYFI, LILLFALYGIAYALFAGNQKAYV, LGLFYTVVGLTSLPASLIAGYLW, and TFLYGSVLAIISGLLLLF.

Belongs to the major facilitator superfamily.

It localises to the cell membrane. This is an uncharacterized protein from Methanocaldococcus jannaschii (strain ATCC 43067 / DSM 2661 / JAL-1 / JCM 10045 / NBRC 100440) (Methanococcus jannaschii).